A 138-amino-acid chain; its full sequence is Endoribonuclease YbeY (138 aa).

Positions 106, 110, and 116 each coordinate Zn(2+).

Belongs to the endoribonuclease YbeY family. Requires Zn(2+) as cofactor.

It is found in the cytoplasm. In terms of biological role, single strand-specific metallo-endoribonuclease involved in late-stage 70S ribosome quality control and in maturation of the 3' terminus of the 16S rRNA. This Phocaeicola vulgatus (strain ATCC 8482 / DSM 1447 / JCM 5826 / CCUG 4940 / NBRC 14291 / NCTC 11154) (Bacteroides vulgatus) protein is Endoribonuclease YbeY.